The chain runs to 176 residues: MANPKVFFDILIGKMKAGRVVMELFADVTPRTANNFRALCTGENGIGKAGKALHYKGSAFHRIIPGFMCQGGDFTRGNGTGGESIYGSKFEDENFKLKHTGPGILSMANSGPNTNGSQFFICTEKTSWLDGKHVVFGKVVDGYNVVKAMEDVGSDMGNPSERVVIEDCGELKNPSS.

In terms of domain architecture, PPIase cyclophilin-type spans 7–170 (FFDILIGKMK…ERVVIEDCGE (164 aa)).

This sequence belongs to the cyclophilin-type PPIase family. In terms of tissue distribution, ubiquitous, with highest levels in flowers and lowest levels in roots.

Its subcellular location is the cytoplasm. The enzyme catalyses [protein]-peptidylproline (omega=180) = [protein]-peptidylproline (omega=0). Its activity is regulated as follows. Binds cyclosporin A (CsA). CsA mediates some of its effects via an inhibitory action on PPIase. PPIases accelerate the folding of proteins. It catalyzes the cis-trans isomerization of proline imidic peptide bonds in oligopeptides. In Arabidopsis thaliana (Mouse-ear cress), this protein is Peptidyl-prolyl cis-trans isomerase CYP19-3 (CYP19-3).